Reading from the N-terminus, the 156-residue chain is Small ribosomal subunit protein uS7 (156 aa).

The protein belongs to the universal ribosomal protein uS7 family. In terms of assembly, part of the 30S ribosomal subunit. Contacts proteins S9 and S11.

Its function is as follows. One of the primary rRNA binding proteins, it binds directly to 16S rRNA where it nucleates assembly of the head domain of the 30S subunit. Is located at the subunit interface close to the decoding center, probably blocks exit of the E-site tRNA. The chain is Small ribosomal subunit protein uS7 from Azoarcus sp. (strain BH72).